The chain runs to 113 residues: Cholecystoxin (113 aa).

An N-terminal signal peptide occupies residues 1-20 (MYGGICLCVLLAVLAISSSG). A propeptide spanning residues 21–79 (QHISRSLNGNSLAAAIEQNFPEKHRPARTPDSNQRVESNIDEKANLGVLLARYLQKARR) is cleaved from the precursor. A disordered region spans residues 77-97 (ARRGTNGKPPDPKKESQDYLG). Tyrosine 95 carries the sulfotyrosine modification. Phenylalanine 101 carries the phenylalanine amide modification. Residues 102 to 113 (GRRSAEEYEYSS) constitute a propeptide that is removed on maturation.

This sequence belongs to the gastrin/cholecystokinin family. As to expression, expressed by the mandibular venom gland.

It localises to the secreted. Cholecystokinin-22: hypotensive neuropeptide that binds cholecystokinin receptor type A receptor (CCKAR). In terms of biological role, cholecystokinin-8: hypotensive neuropeptide that binds cholecystokinin receptor type A receptor (CCKAR). The protein is Cholecystoxin of Varanus varius (Lace monitor lizard).